Reading from the N-terminus, the 260-residue chain is Coiled-coil domain-containing protein 127 (260 aa).

Positions 76-139 form a coiled coil; it reads AVISEHRRAV…EKSRLQPLRN (64 aa).

This Mus musculus (Mouse) protein is Coiled-coil domain-containing protein 127 (Ccdc127).